A 703-amino-acid chain; its full sequence is Glycine--tRNA ligase beta subunit (703 aa).

The protein belongs to the class-II aminoacyl-tRNA synthetase family. As to quaternary structure, tetramer of two alpha and two beta subunits.

It is found in the cytoplasm. The enzyme catalyses tRNA(Gly) + glycine + ATP = glycyl-tRNA(Gly) + AMP + diphosphate. This is Glycine--tRNA ligase beta subunit from Myxococcus xanthus (strain DK1622).